Consider the following 449-residue polypeptide: Pentalenene oxygenase (449 aa).

The chain crosses the membrane as a helical span at residues 251–273 (VITVMAAGTETVAGTLTWIFHLL). Cys393 lines the heme pocket.

Belongs to the cytochrome P450 family.

It localises to the membrane. It catalyses the reaction pentalenene + 4 reduced [2Fe-2S]-[ferredoxin] + 2 O2 + 4 H(+) = pentalen-13-al + 4 oxidized [2Fe-2S]-[ferredoxin] + 3 H2O. It participates in antibiotic biosynthesis; neopentalenolactone biosynthesis. Its function is as follows. Catalyzes the conversion of pentalenene to pentalen-13-al by stepwise oxidation via pentalen-13-ol, a precursor of neopentalenolactone antibiotic. This is Pentalenene oxygenase (ptlI) from Streptomyces avermitilis (strain ATCC 31267 / DSM 46492 / JCM 5070 / NBRC 14893 / NCIMB 12804 / NRRL 8165 / MA-4680).